The sequence spans 371 residues: MGLKKACLTVLCLIVFCFGIFYTFDRVNQGERNAVSLLKDKLFNEEGEPVNLIFCYTILQMKVAERIMAQHPGERFYVVLMSENRNEKYDYYFNQIKDKAERAYFFHLPYGLNKSFNFIPTMAELKVKSMLLPKVKRIYLASLEKVSIAAFLSTYPDAEIKTFDDGTGNLIQSSSYLGDEFSVNGTIKRNFARMMIGDWSIAKTRNASDEHYTIFKGLKNIMDDGRRKMTYLPLFDASELKAGDETGGTVRILLGSPDKEMKEISEKAAKNFNIQYVAPHPRQTYGLSGVTTLNSPYVIEDYILREIKKNPHTRYEIYTFFSGAALTMKDFPNVHVYALKPASLPEDYWLKPVYALFTQSGIPILTFDDKD.

G255 contacts CMP-N-acetyl-beta-neuraminate. D258 functions as the Proton acceptor in the catalytic mechanism. Residues 278–282 (APHPR), 299–300 (IE), and 322–323 (SG) contribute to the CMP-N-acetyl-beta-neuraminate site. Catalysis depends on H280, which acts as the Proton donor.

It belongs to the glycosyltransferase 52 family. In terms of assembly, homodimer.

It localises to the cell outer membrane. The catalysed reaction is a beta-D-galactosyl-(1-&gt;4)-N-acetyl-beta-D-glucosaminyl derivative + CMP-N-acetyl-beta-neuraminate = an N-acetyl-alpha-neuraminyl-(2-&gt;3)-beta-D-galactosyl-(1-&gt;4)-N-acetyl-beta-D-glucosaminyl derivative + CMP + H(+). Its pathway is bacterial outer membrane biogenesis; lipooligosaccharide biosynthesis. Catalyzes the transfer of sialic acid from the substrate CMP-N-acetylneuraminate to the terminal galactose residue of the lacto-N-neotetraose branch of surface lipooligosaccharide (LOS), forming an alpha-2,3-sialyl linkage. Thus, functions in the sialylation of LOS, which plays a role in the evasion of the host immune response by protecting N.meningitidis from complement-mediated serum killing and from phagocytic killing by neutrophils. The polypeptide is N-acetyllactosaminide alpha-2,3-sialyltransferase (Neisseria meningitidis serogroup A / serotype 4A (strain DSM 15465 / Z2491)).